Here is a 102-residue protein sequence, read N- to C-terminus: Small ribosomal subunit protein uS10 (102 aa).

The protein belongs to the universal ribosomal protein uS10 family. As to quaternary structure, part of the 30S ribosomal subunit.

Its function is as follows. Involved in the binding of tRNA to the ribosomes. The protein is Small ribosomal subunit protein uS10 of Cenarchaeum symbiosum (strain A).